Consider the following 276-residue polypeptide: Ribosomal RNA small subunit methyltransferase A (276 aa).

The S-adenosyl-L-methionine site is built by histidine 15, leucine 17, glycine 42, glutamate 64, aspartate 89, and asparagine 108.

It belongs to the class I-like SAM-binding methyltransferase superfamily. rRNA adenine N(6)-methyltransferase family. RsmA subfamily.

The protein resides in the cytoplasm. The catalysed reaction is adenosine(1518)/adenosine(1519) in 16S rRNA + 4 S-adenosyl-L-methionine = N(6)-dimethyladenosine(1518)/N(6)-dimethyladenosine(1519) in 16S rRNA + 4 S-adenosyl-L-homocysteine + 4 H(+). Its function is as follows. Specifically dimethylates two adjacent adenosines (A1518 and A1519) in the loop of a conserved hairpin near the 3'-end of 16S rRNA in the 30S particle. May play a critical role in biogenesis of 30S subunits. The polypeptide is Ribosomal RNA small subunit methyltransferase A (Prochlorococcus marinus (strain MIT 9312)).